The chain runs to 441 residues: D-inositol 3-phosphate glycosyltransferase (441 aa).

Residue His38 coordinates 1D-myo-inositol 3-phosphate. Residues 44–45 and Gly52 contribute to the UDP-N-acetyl-alpha-D-glucosamine site; that span reads QP. 1D-myo-inositol 3-phosphate contacts are provided by residues 49–54, Lys107, Tyr140, Thr164, and Arg184; that span reads DAGGMN. UDP-N-acetyl-alpha-D-glucosamine-binding residues include Arg258, Lys263, and Gln316. Positions 325, 326, and 328 each coordinate Mg(2+). UDP-N-acetyl-alpha-D-glucosamine is bound by residues Glu338 and Glu346. Thr352 lines the Mg(2+) pocket.

This sequence belongs to the glycosyltransferase group 1 family. MshA subfamily. As to quaternary structure, homodimer.

It catalyses the reaction 1D-myo-inositol 3-phosphate + UDP-N-acetyl-alpha-D-glucosamine = 1D-myo-inositol 2-acetamido-2-deoxy-alpha-D-glucopyranoside 3-phosphate + UDP + H(+). In terms of biological role, catalyzes the transfer of a N-acetyl-glucosamine moiety to 1D-myo-inositol 3-phosphate to produce 1D-myo-inositol 2-acetamido-2-deoxy-glucopyranoside 3-phosphate in the mycothiol biosynthesis pathway. The chain is D-inositol 3-phosphate glycosyltransferase from Mycolicibacterium paratuberculosis (strain ATCC BAA-968 / K-10) (Mycobacterium paratuberculosis).